Here is a 293-residue protein sequence, read N- to C-terminus: Insulin-like growth factor-binding protein 3 (293 aa).

The signal sequence occupies residues 1–27 (MQRARPALWAAALIALALLRGPPAARA). Residues 36–119 (PVVRCEPCDA…LDGRGICANA (84 aa)) form the IGFBP N-terminal domain. 6 disulfides stabilise this stretch: cysteine 40-cysteine 69, cysteine 43-cysteine 71, cysteine 51-cysteine 72, cysteine 60-cysteine 75, cysteine 83-cysteine 96, and cysteine 90-cysteine 116. N-linked (GlcNAc...) asparagine glycosylation is found at asparagine 118 and asparagine 138. Disordered regions lie at residues 132–166 (APPAPGNGSESEEDRSVDSMENQALPSTHRVPDSK) and 178–213 (KKGHAKDSQRYKVDYESQSTDTQNFSSESKRETEYG). The residue at position 150 (serine 150) is a Phosphoserine. The span at 178-192 (KKGHAKDSQRYKVDY) shows a compositional bias: basic and acidic residues. Residues 193-204 (ESQSTDTQNFSS) show a composition bias toward polar residues. N-linked (GlcNAc...) asparagine glycosylation occurs at asparagine 201. The residue at position 203 (serine 203) is a Phosphoserine. In terms of domain architecture, Thyroglobulin type-1 spans 212-287 (YGPCRREMED…DVKGKGDVHC (76 aa)). Cystine bridges form between cysteine 215–cysteine 242, cysteine 253–cysteine 264, and cysteine 266–cysteine 287.

Interacts with XLKD1. Binds IGF2 more than IGF1. Forms a ternary complex of about 140 to 150 kDa with IGF1 or IGF2 and a 85 kDa glycoprotein (ALS). Interacts with humanin; humanin competes with importin KPNB1 for binding to IGFBP3, blocking IGFBP3 nuclear import and IGFBP3-mediated apoptosis. Interacts with TMEM219. Interacts with RXRA; this interaction modulates the transcriptional activity of RXRA. Interacts with LRP1; this interaction mediates cell growth inhibition independent of IGF1. Post-translationally, phosphorylated by FAM20C in the extracellular medium. Phosphorylated by CK2; resulting in decreased nuclear localization.

The protein resides in the secreted. Its subcellular location is the nucleus. Functionally, multifunctional protein that plays a critical role in regulating the availability of IGFs such as IGF1 and IGF2 to their receptors and thereby regulates IGF-mediated cellular processes including proliferation, differentiation, and apoptosis in a cell-type specific manner. Also exhibits IGF-independent antiproliferative and apoptotic effects mediated by its receptor TMEM219/IGFBP-3R. Inhibits the positive effect of humanin on insulin sensitivity. Promotes testicular germ cell apoptosis. Acts via LRP-1/alpha2M receptor, also known as TGF-beta type V receptor, to mediate cell growth inhibition independent of IGF1. Mechanistically, induces serine-specific dephosphorylation of IRS1 or IRS2 upon ligation to its receptor, leading to the inhibitory cascade. In the nucleus, interacts with transcription factors such as retinoid X receptor-alpha/RXRA to regulate transcriptional signaling and apoptosis. The polypeptide is Insulin-like growth factor-binding protein 3 (IGFBP3) (Sus scrofa (Pig)).